The following is a 368-amino-acid chain: Phosphoserine aminotransferase (368 aa).

R42 contributes to the L-glutamate binding site. The pyridoxal 5'-phosphate site is built by W101, T151, D175, and Q198. K199 carries the post-translational modification N6-(pyridoxal phosphate)lysine. 240 to 241 (NT) lines the pyridoxal 5'-phosphate pocket.

This sequence belongs to the class-V pyridoxal-phosphate-dependent aminotransferase family. SerC subfamily. In terms of assembly, homodimer. It depends on pyridoxal 5'-phosphate as a cofactor.

The protein localises to the cytoplasm. It carries out the reaction O-phospho-L-serine + 2-oxoglutarate = 3-phosphooxypyruvate + L-glutamate. The catalysed reaction is 4-(phosphooxy)-L-threonine + 2-oxoglutarate = (R)-3-hydroxy-2-oxo-4-phosphooxybutanoate + L-glutamate. It participates in amino-acid biosynthesis; L-serine biosynthesis; L-serine from 3-phospho-D-glycerate: step 2/3. It functions in the pathway cofactor biosynthesis; pyridoxine 5'-phosphate biosynthesis; pyridoxine 5'-phosphate from D-erythrose 4-phosphate: step 3/5. Functionally, catalyzes the reversible conversion of 3-phosphohydroxypyruvate to phosphoserine and of 3-hydroxy-2-oxo-4-phosphonooxybutanoate to phosphohydroxythreonine. This Polaromonas sp. (strain JS666 / ATCC BAA-500) protein is Phosphoserine aminotransferase.